The chain runs to 981 residues: Rab3 GTPase-activating protein catalytic subunit (981 aa).

Residues serine 83, serine 379, serine 537, serine 579, serine 581, and serine 590 each carry the phosphoserine modification. The segment at 592-613 (TEELKGNGQESGKKGGPKEMAN) is disordered. Residue serine 664 is modified to Phosphoserine. Threonine 908 bears the Phosphothreonine mark. The disordered stretch occupies residues 908-937 (TPPEEELKRMGSPEERRQNSVSDFPPPAGR). Basic and acidic residues predominate over residues 912 to 925 (EELKRMGSPEERRQ).

This sequence belongs to the Rab3-GAP catalytic subunit family. As to quaternary structure, the Rab3 GTPase-activating complex is a heterodimer composed of RAB3GAP1 and RAB3GAP2. The Rab3 GTPase-activating complex interacts with DMXL2. Interacts with LMAN1. Ubiquitous.

Its subcellular location is the cytoplasm. It localises to the endoplasmic reticulum. The protein localises to the golgi apparatus. The protein resides in the cis-Golgi network. Its function is as follows. Catalytic subunit of the Rab3 GTPase-activating (Rab3GAP) complex composed of RAB3GAP1 and RAB3GAP2, which has GTPase-activating protein (GAP) activity towards various Rab3 subfamily members (RAB3A, RAB3B, RAB3C and RAB3D), RAB5A and RAB43, and guanine nucleotide exchange factor (GEF) activity towards RAB18. As part of the Rab3GAP complex, acts as a GAP for Rab3 proteins by converting active RAB3-GTP to the inactive form RAB3-GDP. Rab3 proteins are involved in regulated exocytosis of neurotransmitters and hormones. The Rab3GAP complex, acts as a GEF for RAB18 by promoting the conversion of inactive RAB18-GDP to the active form RAB18-GTP. Recruits and stabilizes RAB18 at the cis-Golgi membrane in fibroblasts where RAB18 is most likely activated. Also involved in RAB18 recruitment at the endoplasmic reticulum (ER) membrane where it maintains proper ER structure. Required for normal eye and brain development. May participate in neurodevelopmental processes such as proliferation, migration and differentiation before synapse formation, and non-synaptic vesicular release of neurotransmitters. The chain is Rab3 GTPase-activating protein catalytic subunit from Homo sapiens (Human).